The chain runs to 691 residues: MAVKVEYDLKRLRNIGIAAHIDAGKTTTTERILYYTGRIHKIGEVHEGAATMDFMEQERERGITITAAVTTCFWKDHRINIIDTPGHVDFTIEVERSMRVLDGAIVVFDSSQGVEPQSETVWRQAEKYKVPRIAFANKMDKTGADLWLVIRTMQERLGARPVVMQLPIGREDTFSGIIDVLRMKAYTYGNDLGTDIREIPIPEEYLDQAREYHEKLVEVAADFDENIMLKYLEGEEPTEEELVAAIRKGTIDLKITPVFLGSALKNKGVQLLLDAVVDYLPSPLDIPPIKGTTPEGEVVEIHPDPNGPLAALAFKIMADPYVGRLTFIRVYSGTLTSGSYVYNTTKGRKERVARLLRMHANHREEVEELKAGDLGAVVGLKETITGDTLVGEDAPRVILESIEVPEPVIDVAIEPKTKADQEKLSQALARLAEEDPTFRVSTHPETGQTIISGMGELHLEIIVDRLKREFKVDANVGKPQVAYRETITKPVDVEGKFIRQTGGRGQYGHVKIKVEPLPRGSGFEFVNAIVGGVIPKEYIPAVQKGIEEAMQSGPLIGFPVVDIKVTLYDGSYHEVDSSEMAFKIAGSMAIKEAVQKGDPVILEPIMRVEVTTPEEYMGDVIGDLNARRGQILGMEPRGNAQVIRAFVPLAEMFGYATDLRSKTQGRGSFVMFFDHYQEVPKQVQEKLIKGQ.

Residues 10-284 (KRLRNIGIAA…AVVDYLPSPL (275 aa)) enclose the tr-type G domain. GTP contacts are provided by residues 19–26 (AHIDAGKT), 83–87 (DTPGH), and 137–140 (NKMD).

This sequence belongs to the TRAFAC class translation factor GTPase superfamily. Classic translation factor GTPase family. EF-G/EF-2 subfamily.

It is found in the cytoplasm. Catalyzes the GTP-dependent ribosomal translocation step during translation elongation. During this step, the ribosome changes from the pre-translocational (PRE) to the post-translocational (POST) state as the newly formed A-site-bound peptidyl-tRNA and P-site-bound deacylated tRNA move to the P and E sites, respectively. Catalyzes the coordinated movement of the two tRNA molecules, the mRNA and conformational changes in the ribosome. This is Elongation factor G (fusA) from Thermus thermophilus (strain ATCC 27634 / DSM 579 / HB8).